We begin with the raw amino-acid sequence, 1419 residues long: DNA-directed RNA polymerase subunit beta' (1419 aa).

The Zn(2+) site is built by cysteine 71, cysteine 73, cysteine 86, and cysteine 89. Positions 461, 463, and 465 each coordinate Mg(2+). Zn(2+) contacts are provided by cysteine 815, cysteine 889, cysteine 896, and cysteine 899.

Belongs to the RNA polymerase beta' chain family. The RNAP catalytic core consists of 2 alpha, 1 beta, 1 beta' and 1 omega subunit. When a sigma factor is associated with the core the holoenzyme is formed, which can initiate transcription. Requires Mg(2+) as cofactor. Zn(2+) serves as cofactor.

It carries out the reaction RNA(n) + a ribonucleoside 5'-triphosphate = RNA(n+1) + diphosphate. DNA-dependent RNA polymerase catalyzes the transcription of DNA into RNA using the four ribonucleoside triphosphates as substrates. The polypeptide is DNA-directed RNA polymerase subunit beta' (Actinobacillus succinogenes (strain ATCC 55618 / DSM 22257 / CCUG 43843 / 130Z)).